A 631-amino-acid polypeptide reads, in one-letter code: Phosphomethylpyrimidine synthase (631 aa).

Substrate contacts are provided by residues asparagine 239, methionine 268, tyrosine 297, histidine 333, 353-355 (SRG), 394-397 (DGLR), and glutamate 433. Histidine 437 contacts Zn(2+). Tyrosine 460 serves as a coordination point for substrate. Histidine 501 is a Zn(2+) binding site. [4Fe-4S] cluster contacts are provided by cysteine 581, cysteine 584, and cysteine 589.

This sequence belongs to the ThiC family. As to quaternary structure, homodimer. Requires [4Fe-4S] cluster as cofactor.

It catalyses the reaction 5-amino-1-(5-phospho-beta-D-ribosyl)imidazole + S-adenosyl-L-methionine = 4-amino-2-methyl-5-(phosphooxymethyl)pyrimidine + CO + 5'-deoxyadenosine + formate + L-methionine + 3 H(+). The protein operates within cofactor biosynthesis; thiamine diphosphate biosynthesis. Catalyzes the synthesis of the hydroxymethylpyrimidine phosphate (HMP-P) moiety of thiamine from aminoimidazole ribotide (AIR) in a radical S-adenosyl-L-methionine (SAM)-dependent reaction. This is Phosphomethylpyrimidine synthase from Salmonella heidelberg (strain SL476).